A 526-amino-acid polypeptide reads, in one-letter code: Glutamate--cysteine ligase (526 aa).

Belongs to the glutamate--cysteine ligase type 1 family. Type 1 subfamily.

It carries out the reaction L-cysteine + L-glutamate + ATP = gamma-L-glutamyl-L-cysteine + ADP + phosphate + H(+). It participates in sulfur metabolism; glutathione biosynthesis; glutathione from L-cysteine and L-glutamate: step 1/2. This is Glutamate--cysteine ligase from Shewanella amazonensis (strain ATCC BAA-1098 / SB2B).